A 223-amino-acid chain; its full sequence is Thiamine-phosphate synthase (223 aa).

4-amino-2-methyl-5-(diphosphooxymethyl)pyrimidine contacts are provided by residues 45 to 49 (QYREK) and N77. Residues D78 and D97 each coordinate Mg(2+). Position 116 (T116) interacts with 4-amino-2-methyl-5-(diphosphooxymethyl)pyrimidine. 142 to 144 (SYT) serves as a coordination point for 2-[(2R,5Z)-2-carboxy-4-methylthiazol-5(2H)-ylidene]ethyl phosphate. K145 contacts 4-amino-2-methyl-5-(diphosphooxymethyl)pyrimidine. Residues G173 and 193-194 (VT) each bind 2-[(2R,5Z)-2-carboxy-4-methylthiazol-5(2H)-ylidene]ethyl phosphate.

Belongs to the thiamine-phosphate synthase family. It depends on Mg(2+) as a cofactor.

It catalyses the reaction 2-[(2R,5Z)-2-carboxy-4-methylthiazol-5(2H)-ylidene]ethyl phosphate + 4-amino-2-methyl-5-(diphosphooxymethyl)pyrimidine + 2 H(+) = thiamine phosphate + CO2 + diphosphate. The catalysed reaction is 2-(2-carboxy-4-methylthiazol-5-yl)ethyl phosphate + 4-amino-2-methyl-5-(diphosphooxymethyl)pyrimidine + 2 H(+) = thiamine phosphate + CO2 + diphosphate. It carries out the reaction 4-methyl-5-(2-phosphooxyethyl)-thiazole + 4-amino-2-methyl-5-(diphosphooxymethyl)pyrimidine + H(+) = thiamine phosphate + diphosphate. The protein operates within cofactor biosynthesis; thiamine diphosphate biosynthesis; thiamine phosphate from 4-amino-2-methyl-5-diphosphomethylpyrimidine and 4-methyl-5-(2-phosphoethyl)-thiazole: step 1/1. Its function is as follows. Condenses 4-methyl-5-(beta-hydroxyethyl)thiazole monophosphate (THZ-P) and 2-methyl-4-amino-5-hydroxymethyl pyrimidine pyrophosphate (HMP-PP) to form thiamine monophosphate (TMP). This is Thiamine-phosphate synthase from Dictyoglomus thermophilum (strain ATCC 35947 / DSM 3960 / H-6-12).